The primary structure comprises 935 residues: Isoleucine--tRNA ligase (935 aa).

Residues 58–68 (PYANGSIHVGH) carry the 'HIGH' region motif. An L-isoleucyl-5'-AMP-binding site is contributed by Glu-558. The 'KMSKS' region motif lies at 599–603 (KMSKS). Lys-602 serves as a coordination point for ATP. Zn(2+) is bound by residues Cys-897, Cys-900, Cys-917, and Cys-920.

It belongs to the class-I aminoacyl-tRNA synthetase family. IleS type 1 subfamily. As to quaternary structure, monomer. It depends on Zn(2+) as a cofactor.

It localises to the cytoplasm. The catalysed reaction is tRNA(Ile) + L-isoleucine + ATP = L-isoleucyl-tRNA(Ile) + AMP + diphosphate. Catalyzes the attachment of isoleucine to tRNA(Ile). As IleRS can inadvertently accommodate and process structurally similar amino acids such as valine, to avoid such errors it has two additional distinct tRNA(Ile)-dependent editing activities. One activity is designated as 'pretransfer' editing and involves the hydrolysis of activated Val-AMP. The other activity is designated 'posttransfer' editing and involves deacylation of mischarged Val-tRNA(Ile). The sequence is that of Isoleucine--tRNA ligase from Francisella tularensis subsp. tularensis (strain WY96-3418).